A 456-amino-acid polypeptide reads, in one-letter code: MTTSIAGLESLGRVHFIGIGGVGMSAVARIMVSRGVPVSGSDVKDLPVMRDLSSAGARIAVGYDAGNLGDAQTIVAGSAIRADNPELVAAREAGLPVLHRSEALAATMAGHRVVTVAGTHGKSTTTSMVAVLLKEAGLDPSFAIGANVPALGVNAAHGSSDIFVAEADESDGSFLNYRPLIAVVTNVEADHLDHYGTPEAVFASFDDFAALLPAQGVLLACSDDAGARALADRTASKGTTRVLTYGTSDDADIRLHDGGPGDVSVALDGGVHKLELQVPGRHNALNAAAAFAVAVELGVEPGAAAAALGHFTGASRRFELKGRGRGVRVYDDYAHHPTEVRAALSAARSVAGDNKVHVLFQPHLFSRTREFSQEFAAALDLADTALVLDIYPAREDPIPGVTSTLITDHLVNGRLVSADEAVDAVAAVASEGDVVLTVGAGDVTAYGPVIVEALGG.

ATP is bound at residue 118–124; the sequence is GTHGKST.

Belongs to the MurCDEF family.

The protein localises to the cytoplasm. The enzyme catalyses UDP-N-acetyl-alpha-D-muramate + L-alanine + ATP = UDP-N-acetyl-alpha-D-muramoyl-L-alanine + ADP + phosphate + H(+). Its pathway is cell wall biogenesis; peptidoglycan biosynthesis. In terms of biological role, cell wall formation. This Paenarthrobacter aurescens (strain TC1) protein is UDP-N-acetylmuramate--L-alanine ligase.